We begin with the raw amino-acid sequence, 263 residues long: Eukaryotic translation initiation factor 3 subunit J-B (263 aa).

Residues 1–13 (MAAAAAAAAAAAA) show a composition bias toward low complexity. The disordered stretch occupies residues 1–115 (MAAAAAAAAA…EPEESKVLTP (115 aa)). Alanine 2 carries the post-translational modification N-acetylalanine. Residues 6 to 74 (AAAAAAAAGD…KEEAEVKPEV (69 aa)) form a sufficient for interaction with EIF3B region. Phosphoserine is present on residues serine 16, serine 18, and serine 25. The span at 45–66 (EGEDEDEDVKDNWDDDDDENKE) shows a compositional bias: acidic residues. Residues 67–111 (EAEVKPEVKISEKKKIAEKIKEKERQQKKRQEEIKKRLEEPEESK) are compositionally biased toward basic and acidic residues. A coiled-coil region spans residues 75 to 140 (KISEKKKIAE…ESDLELAKET (66 aa)). A Glycyl lysine isopeptide (Lys-Gly) (interchain with G-Cter in SUMO2) cross-link involves residue lysine 111. Threonine 114 carries the post-translational modification Phosphothreonine. Residue serine 132 is modified to Phosphoserine. Positions 248 to 263 (YGGYEGGYVQDYEDFM) are promotes stable association with the 40S ribosome. Tyrosine 259 carries the phosphotyrosine modification.

The protein belongs to the eIF-3 subunit J family. As to quaternary structure, component of the eukaryotic translation initiation factor 3 (eIF-3) complex, which is composed of 13 subunits: EIF3A, EIF3B, EIF3C, EIF3D, EIF3E, EIF3F, EIF3G, EIF3H, EIF3I, EIF3J, EIF3K, EIF3L and EIF3M. The eIF-3 complex appears to include 3 stable modules: module A is composed of EIF3A, EIF3B, EIF3G and EIF3I; module B is composed of EIF3F, EIF3H, and EIF3M; and module C is composed of EIF3C, EIF3D, EIF3E, EIF3K and EIF3L. EIF3C of module C binds EIF3B of module A and EIF3H of module B, thereby linking the three modules. EIF3J is a labile subunit that binds to the eIF-3 complex via EIF3B. The eIF-3 complex interacts with RPS6KB1 under conditions of nutrient depletion. Mitogenic stimulation leads to binding and activation of a complex composed of MTOR and RPTOR, leading to phosphorylation and release of RPS6KB1 and binding of EIF4B to eIF-3. In terms of processing, phosphorylated. Phosphorylation is enhanced upon serum stimulation.

It localises to the cytoplasm. Component of the eukaryotic translation initiation factor 3 (eIF-3) complex, which is required for several steps in the initiation of protein synthesis. The eIF-3 complex associates with the 40S ribosome and facilitates the recruitment of eIF-1, eIF-1A, eIF-2:GTP:methionyl-tRNAi and eIF-5 to form the 43S pre-initiation complex (43S PIC). The eIF-3 complex stimulates mRNA recruitment to the 43S PIC and scanning of the mRNA for AUG recognition. The eIF-3 complex is also required for disassembly and recycling of post-termination ribosomal complexes and subsequently prevents premature joining of the 40S and 60S ribosomal subunits prior to initiation. The eIF-3 complex specifically targets and initiates translation of a subset of mRNAs involved in cell proliferation, including cell cycling, differentiation and apoptosis, and uses different modes of RNA stem-loop binding to exert either translational activation or repression. This subunit binds directly within the mRNA entry channel of the 40S ribosome to the aminoacyl (A) site. It may regulate the interaction between the 43S PIC and mRNA. The protein is Eukaryotic translation initiation factor 3 subunit J-B (Eif3j2) of Mus musculus (Mouse).